The primary structure comprises 159 residues: SsrA-binding protein (159 aa).

Belongs to the SmpB family.

The protein localises to the cytoplasm. Functionally, required for rescue of stalled ribosomes mediated by trans-translation. Binds to transfer-messenger RNA (tmRNA), required for stable association of tmRNA with ribosomes. tmRNA and SmpB together mimic tRNA shape, replacing the anticodon stem-loop with SmpB. tmRNA is encoded by the ssrA gene; the 2 termini fold to resemble tRNA(Ala) and it encodes a 'tag peptide', a short internal open reading frame. During trans-translation Ala-aminoacylated tmRNA acts like a tRNA, entering the A-site of stalled ribosomes, displacing the stalled mRNA. The ribosome then switches to translate the ORF on the tmRNA; the nascent peptide is terminated with the 'tag peptide' encoded by the tmRNA and targeted for degradation. The ribosome is freed to recommence translation, which seems to be the essential function of trans-translation. The sequence is that of SsrA-binding protein from Coxiella burnetii (strain CbuG_Q212) (Coxiella burnetii (strain Q212)).